We begin with the raw amino-acid sequence, 438 residues long: Phosphoribosylamine--glycine ligase (438 aa).

One can recognise an ATP-grasp domain in the interval 108–316 (REFMERNDIP…LVEIAEGIVK (209 aa)). Residue 135–194 (IDEYGKPVVVKPLGLTGGKGVKVVGYQLKDNEEAKEYAEYLIKKDGKVLIEERTDGVEFT) participates in ATP binding. Mg(2+)-binding residues include glutamine 274, glutamate 286, and asparagine 288. Positions 274, 286, and 288 each coordinate Mn(2+).

This sequence belongs to the GARS family. Requires Mg(2+) as cofactor. Mn(2+) is required as a cofactor.

It catalyses the reaction 5-phospho-beta-D-ribosylamine + glycine + ATP = N(1)-(5-phospho-beta-D-ribosyl)glycinamide + ADP + phosphate + H(+). It functions in the pathway purine metabolism; IMP biosynthesis via de novo pathway; N(1)-(5-phospho-D-ribosyl)glycinamide from 5-phospho-alpha-D-ribose 1-diphosphate: step 2/2. The polypeptide is Phosphoribosylamine--glycine ligase (Pyrococcus abyssi (strain GE5 / Orsay)).